A 430-amino-acid chain; its full sequence is C4-dicarboxylate transport protein (430 aa).

8 consecutive transmembrane segments (helical) span residues 9 to 29 (VLYVQVIFAIIVGVILGHFYP), 45 to 65 (LIKMVIGPIIFCTVVTGIAGM), 79 to 99 (LLYFEIVSTFALLLGLAATHL), 149 to 169 (GEILQILLIALLFGSVLAHLG), 185 to 205 (VLFGIVHIVTKLAPIGAFGAM), 223 to 243 (LIGTFYLTSVVFVLVVLGAIA), 308 to 328 (IYMTMAVLFIAQATNIELTWM), and 356 to 376 (AATLAVVPTIPLSGMVLILGI).

This sequence belongs to the dicarboxylate/amino acid:cation symporter (DAACS) (TC 2.A.23) family.

Its subcellular location is the cell inner membrane. Its function is as follows. Responsible for the transport of dicarboxylates such as succinate, fumarate, and malate from the periplasm across the membrane. This chain is C4-dicarboxylate transport protein, found in Burkholderia orbicola (strain AU 1054).